The chain runs to 132 residues: Myelin P2 protein (132 aa).

At S2 the chain carries N-acetylserine. Position 107 (R107) interacts with (9Z)-octadecenoate. R107 lines the hexadecanoate pocket. C118 and C125 are oxidised to a cystine. 127 to 129 (RIY) is a (9Z)-octadecenoate binding site. 127–129 (RIY) serves as a coordination point for hexadecanoate.

It belongs to the calycin superfamily. Fatty-acid binding protein (FABP) family. In terms of assembly, monomer.

It is found in the cytoplasm. Functionally, may play a role in lipid transport protein in Schwann cells. May bind cholesterol. The polypeptide is Myelin P2 protein (Sus scrofa (Pig)).